The sequence spans 186 residues: Acetyltransferase PA5475 (186 aa).

An N-acetyltransferase domain is found at 31–186; sequence VLIRPLREED…STQVIHRLAL (156 aa). Residues 117-119, Gly-125, Asn-156, and 161-163 each bind CoA; these read VTI and DLC.

In terms of biological role, catalyzes the transfer of an acetyl group from acetyl coenzyme A (AcCoA) to an acceptor substrate and releases both CoA and the acetylated product. It prefers the antibiotic chloramphenicol. The protein is Acetyltransferase PA5475 of Pseudomonas aeruginosa (strain ATCC 15692 / DSM 22644 / CIP 104116 / JCM 14847 / LMG 12228 / 1C / PRS 101 / PAO1).